Reading from the N-terminus, the 114-residue chain is Lectin MVL (114 aa).

Residues 2–55 (ASYKVNIPAGPLWSNAEAQQVGPKIAAAHQGNFTGQWTTVVESAMSVVEVELQV) form repeat 1. Residues 12–16 (PLWSN), Gln20, and 36–44 (GQWTTVVES) each bind a carbohydrate. The linker stretch occupies residues 56–60 (ENTGI). Repeat 2 spans residues 61–114 (HEFKTDVLAGPLWSNDEAQKLGPQIAASYGAEFTGQWRTIVEGVMSVIQIKYTF). Residues 71–75 (PLWSN), Gln79, and 95–103 (GQWRTIVEG) contribute to the a carbohydrate site.

Homodimer.

Its subcellular location is the cytoplasm. Functionally, carbohydrate-binding protein that binds oligomannosides such as Man(6)GlcNAc(2) with sub-micromolar affinities. The specificity of MVL is unique in that its minimal target comprises the Man-alpha-(1-&gt;6)-Man-beta-(1-&gt;4)-GlcNAc-beta-(1-&gt;4)-GlcNAc tetrasaccharide core (Man(2)A) found in N-linked oligomannosides. Displays hemagglutininating activity on rabbit, horse and hen erythrocytes. This activity is inhibited by yeast mannan. Does not bind mono- and disaccharides. Inhibits HIV-1 envelope-mediated cell fusion at nanomolar concentrations through carbohydrate-mediated interactions with high-mannose residues on the surface of the HIV envelope glycoprotein gp120. In terms of biological role, unexpectedly for a lectin, one of the 2 oligomannose binding sites of MVL can catalyze the cleavage of chitin fragments (such as chitotriose, i.e. GlcNAc(3) or GlcNAc-beta-(1-&gt;4)-GlcNAcbeta-(1-&gt;4)-GlcNAc, and chitotetraose, i.e. GlcNAc(4)) to GlcNAc. This weak beta-1,4-glycosidase activity is restricted to the C-terminal carbohydrate-binding site. Does not cleave Man(3)GlcNAc(2) or the tetrasaccharide Man(2)A. The polypeptide is Lectin MVL (mvl) (Microcystis viridis (Polycystis viridis)).